We begin with the raw amino-acid sequence, 1537 residues long: Histone-lysine N-methyltransferase, H3 lysine-79 specific (1537 aa).

Residues 16–330 enclose the DOT1 domain; the sequence is EPAVYPWPLP…ILENYFSSLK (315 aa). Residues 136-139, 159-168, Glu-186, and 222-223 each bind S-adenosyl-L-methionine; these read YGET, FVDLGSGVGQ, and DF. Ser-297 carries the post-translational modification Phosphoserine. Residues 334 to 350 are compositionally biased toward basic and acidic residues; that stretch reads LREEQEAARRRQQRESK. Positions 334–467 are disordered; that stretch reads LREEQEAARR…SPFYQLPPSV (134 aa). Phosphoserine is present on Ser-374. Positions 391-416 are required for interaction with nucleosomes and DNA; sequence PSKARKKKLNKKGRKMAGRKRGRPKK. Residues 393–416 show a composition bias toward basic residues; the sequence is KARKKKLNKKGRKMAGRKRGRPKK. The segment covering 439–450 has biased composition (polar residues); the sequence is QTVSQTAASSPQ. Phosphoserine occurs at positions 448 and 471. Thr-480 carries the post-translational modification Phosphothreonine. Phosphoserine occurs at positions 775 and 786. Disordered stretches follow at residues 785–853, 893–912, 957–1128, and 1145–1243; these read LSQD…LRER, RAER…DPSS, TPGA…LNLN, and SPET…KWKS. Basic and acidic residues predominate over residues 800–809; the sequence is LHSRAEHTKE. Ser-826 bears the Phosphoserine mark. Phosphoserine; by MAPK11 is present on Ser-834. Residues 844 to 853 show a composition bias toward basic and acidic residues; it reads KSSEKGLRER. 3 stretches are compositionally biased toward polar residues: residues 899–912, 966–986, and 994–1010; these read STPS…DPSS, DESS…STPQ, and PRNS…SSSP. A Phosphothreonine; by MAPK11 modification is found at Thr-900. The residue at position 902 (Ser-902) is a Phosphoserine; by MAPK11. Thr-984 carries the phosphothreonine; by MAPK11 modification. Ser-997 is modified (phosphoserine). Phosphoserine; by MAPK11 is present on residues Ser-1001 and Ser-1009. Residue Ser-1035 is modified to Phosphoserine. Positions 1048–1068 are enriched in polar residues; sequence TITTGAGSAKQSPSSKHSPLT. Ser-1093 is modified (phosphoserine). Phosphoserine; by MAPK11 is present on Ser-1104. Residues 1118 to 1128 are compositionally biased toward polar residues; it reads TQPSGSPLNLN. The span at 1158–1171 shows a compositional bias: basic and acidic residues; sequence QDHDQPPVLKKERP. A compositionally biased stretch (polar residues) spans 1172–1184; the sequence is LSQTNGAHYSPLT. The segment covering 1185–1195 has biased composition (acidic residues); that stretch reads SDEEPGSEDEP. 2 positions are modified to phosphoserine: Ser-1213 and Ser-1246. The disordered stretch occupies residues 1334 to 1410; sequence GASLPHKGPE…DKTPLLSGKA (77 aa).

Belongs to the class I-like SAM-binding methyltransferase superfamily. DOT1 family. As to quaternary structure, interacts with MLLT10.

Its subcellular location is the nucleus. It carries out the reaction L-lysyl(79)-[histone H3] + 3 S-adenosyl-L-methionine = N(6),N(6),N(6)-trimethyl-L-lysyl(79)-[histone H3] + 3 S-adenosyl-L-homocysteine + 3 H(+). Its function is as follows. Histone methyltransferase. Methylates 'Lys-79' of histone H3. Nucleosomes are preferred as substrate compared to free histones. Binds to DNA. The polypeptide is Histone-lysine N-methyltransferase, H3 lysine-79 specific (Homo sapiens (Human)).